Consider the following 188-residue polypeptide: Putative manganese efflux pump MntP (188 aa).

6 consecutive transmembrane segments (helical) span residues 3–23 (LFSL…VSIC), 39–59 (AGLY…LLGV), 65–85 (ITDY…VNML), 110–130 (LGFA…FLSV), 131–151 (DIYS…IIGV), and 167–187 (ILGG…HTLF).

The protein belongs to the MntP (TC 9.B.29) family.

It localises to the cell inner membrane. Probably functions as a manganese efflux pump. This chain is Putative manganese efflux pump MntP, found in Mannheimia succiniciproducens (strain KCTC 0769BP / MBEL55E).